The chain runs to 184 residues: NADH-quinone oxidoreductase subunit B 2 (184 aa).

[4Fe-4S] cluster is bound by residues Cys59, Cys60, Cys125, and Cys153.

It belongs to the complex I 20 kDa subunit family. As to quaternary structure, NDH-1 is composed of 14 different subunits. Subunits NuoB, C, D, E, F, and G constitute the peripheral sector of the complex. It depends on [4Fe-4S] cluster as a cofactor.

The protein localises to the cell inner membrane. The catalysed reaction is a quinone + NADH + 5 H(+)(in) = a quinol + NAD(+) + 4 H(+)(out). Its function is as follows. NDH-1 shuttles electrons from NADH, via FMN and iron-sulfur (Fe-S) centers, to quinones in the respiratory chain. Couples the redox reaction to proton translocation (for every two electrons transferred, four hydrogen ions are translocated across the cytoplasmic membrane), and thus conserves the redox energy in a proton gradient. This Solibacter usitatus (strain Ellin6076) protein is NADH-quinone oxidoreductase subunit B 2.